We begin with the raw amino-acid sequence, 569 residues long: Arylsulfatase I (569 aa).

The N-terminal stretch at 1–23 (MHTLTGFSLVSLLSFGYLSWDWA) is a signal peptide. 3 residues coordinate Ca(2+): Asp-55, Asp-56, and Cys-93. Cys-93 serves as the catalytic Nucleophile. Residue Cys-93 is modified to 3-oxoalanine (Cys). Residue Lys-147 coordinates substrate. His-149 is a catalytic residue. Position 239 (His-239) interacts with substrate. Asn-276 and Asn-288 each carry an N-linked (GlcNAc...) asparagine glycan. Asp-297 and Asn-298 together coordinate Ca(2+). Lys-315 contributes to the substrate binding site. 2 N-linked (GlcNAc...) asparagine glycosylation sites follow: Asn-466 and Asn-496. Positions 510 to 539 (RAHPDFNGGAWGPWASDEEEEEEEGRARSF) are disordered.

The protein belongs to the sulfatase family. Requires Ca(2+) as cofactor. The oxidation of Cys-93 residue to 3-oxoalanine (also known as C(alpha)-formylglycine) by SUMF1/Sulfatase-modifying factor 1, seems critical for catalytic activity. Expressed in placenta, in embryonic stem cells, fetal eyes and lens.

The protein localises to the secreted. The protein resides in the endoplasmic reticulum. Functionally, displays arylsulfatase activity at neutral pH, when co-expressed with SUMF1; arylsulfatase activity is measured in the secretion medium of retinal cell line, but no activity is recorded when measured in cell extracts. Lacks arylsulfatase activity. This is Arylsulfatase I (ARSI) from Homo sapiens (Human).